A 262-amino-acid chain; its full sequence is 5'-nucleotidase SurE (262 aa).

Aspartate 8, aspartate 9, serine 40, and asparagine 92 together coordinate a divalent metal cation.

It belongs to the SurE nucleotidase family. A divalent metal cation serves as cofactor.

Its subcellular location is the cytoplasm. The enzyme catalyses a ribonucleoside 5'-phosphate + H2O = a ribonucleoside + phosphate. In terms of biological role, nucleotidase that shows phosphatase activity on nucleoside 5'-monophosphates. This Xylella fastidiosa (strain M23) protein is 5'-nucleotidase SurE.